The primary structure comprises 244 residues: MAGHSKWANIKHRKGANDAKKAKYFGKLIREITAAVKQSGNDIEVNPRLRLAIQNAKGANMPKENIDRAINKGSTADTADFTSVVYEGNASHGVALIVECTTDNLNRTVANVRAAFSKHGGSLGKNGSVSFLFDRKGTFSINAADVKDEEALTLALIEAGAEAIEHDQEEGYYHIISSLEDFGSVQKELDNLHLEPVSASLQYIPQNQVELNEETLSKVMKLIEALEDNDDVQKVYHNIANNTE.

Belongs to the TACO1 family.

It localises to the cytoplasm. The chain is Probable transcriptional regulatory protein Aasi_0624 from Amoebophilus asiaticus (strain 5a2).